The chain runs to 576 residues: High-affinity choline transporter 1 (576 aa).

Residues 6 to 26 (GIVAIVFFYVLILVVGIWAGR) form a helical membrane-spanning segment. The Cytoplasmic segment spans residues 27–51 (KSKSSKELESEAGAATEEVMLAGRN). Residues 52–72 (IGTLVGIFTMTATWVGGAYIN) form a helical membrane-spanning segment. Topologically, residues 73–82 (GTAEALYNGG) are extracellular. A helical transmembrane segment spans residues 83–103 (LLGCQAPVGYAISLVMGGLLF). At 104 to 126 (AKKMREEGYITMLDPFQHKYGQR) the chain is on the cytoplasmic side. The helical transmembrane segment at 127 to 147 (IGGLMYVPALLGETFWTAAIL) threads the bilayer. The Extracellular segment spans residues 148-165 (SALGATLSVILGIDMNAS). The helical transmembrane segment at 166-186 (VTLSACIAVFYTFTGGYYAVA) threads the bilayer. Over 187–192 (YTDVVQ) the chain is Cytoplasmic. Residues 193–213 (LFCIFVGLWVCVPAAMVHDGA) form a helical membrane-spanning segment. The Extracellular portion of the chain corresponds to 214–233 (KDISRNAGDWIGEIGGFKET). A helical transmembrane segment spans residues 234–254 (SLWIDCMLLLVFGGIPWQVYF). The Cytoplasmic portion of the chain corresponds to 255 to 270 (QRVLSSKTAHGAQTLS). A helical transmembrane segment spans residues 271–291 (FVAGVGCILMAIPPALIGAIA). The Extracellular segment spans residues 292 to 319 (RNTDWRMTDYSPWNNGTKVESIPPDKRN). A glycan (N-linked (GlcNAc...) asparagine) is linked at asparagine 306. A helical membrane pass occupies residues 320 to 340 (MVVPLVFQYLTPRWVAFIGLG). Over 341 to 378 (AVSAAVMSSADSSVLSAASMFAHNIWKLTIRPHASEKE) the chain is Cytoplasmic. The chain crosses the membrane as a helical span at residues 379 to 399 (VIIVMRIAIICVGIMATIMAL). The Extracellular segment spans residues 400 to 408 (TIQSIYGLW). A helical membrane pass occupies residues 409–429 (YLCADLVYVILFPQLLCVVYM). At 430–437 (PRSNTYGS) the chain is on the cytoplasmic side. The helical transmembrane segment at 438–458 (LAGYAVGLVLRLIGGEPLVSL) threads the bilayer. The Extracellular portion of the chain corresponds to 459 to 478 (PAFFHYPMYTDGVQYFPFRT). The chain crosses the membrane as a helical span at residues 479 to 499 (TAMLSSMATIYIVSIQSEKLF). At 500–576 (KSGRLSPEWD…DQSYYSTNSN (77 aa)) the chain is on the cytoplasmic side. Positions 541–576 (APNGTPAPVHPNQQPSDENTLLHPYSDQSYYSTNSN) are disordered. Polar residues predominate over residues 566–576 (SDQSYYSTNSN).

Belongs to the sodium:solute symporter (SSF) (TC 2.A.21) family. As to expression, detected in the nervous system, including the nerve ring and cholinergic motor neurons of the ventral nerve cord.

Its subcellular location is the membrane. In terms of biological role, imports choline from the extracellular space to the neuron with high affinity. Choline uptake is the rate-limiting step in acetylcholine synthesis. Sodium ion and chloride ion dependent. The chain is High-affinity choline transporter 1 (cho-1) from Caenorhabditis elegans.